Here is a 697-residue protein sequence, read N- to C-terminus: Elongation factor G 2 (697 aa).

The 276-residue stretch at 6–281 folds into the tr-type G domain; that stretch reads TNYRNFGIFA…AVVDFLPNPT (276 aa). GTP is bound by residues 15–22, 79–83, and 133–136; these read AHVDAGKT, DTPGH, and NKLD.

It belongs to the TRAFAC class translation factor GTPase superfamily. Classic translation factor GTPase family. EF-G/EF-2 subfamily.

The protein localises to the cytoplasm. Its function is as follows. Catalyzes the GTP-dependent ribosomal translocation step during translation elongation. During this step, the ribosome changes from the pre-translocational (PRE) to the post-translocational (POST) state as the newly formed A-site-bound peptidyl-tRNA and P-site-bound deacylated tRNA move to the P and E sites, respectively. Catalyzes the coordinated movement of the two tRNA molecules, the mRNA and conformational changes in the ribosome. The sequence is that of Elongation factor G 2 from Trichodesmium erythraeum (strain IMS101).